The following is a 203-amino-acid chain: Probable GTP-binding protein EngB (203 aa).

Positions 24-199 (DGSEVAFAGR…HTVIETWLGL (176 aa)) constitute an EngB-type G domain. GTP contacts are provided by residues 32–39 (GRSNAGKS), 59–63 (GRTQQ), 77–80 (DLPG), 144–147 (TKAD), and 178–180 (FSS). Residues serine 39 and threonine 61 each contribute to the Mg(2+) site.

Belongs to the TRAFAC class TrmE-Era-EngA-EngB-Septin-like GTPase superfamily. EngB GTPase family. It depends on Mg(2+) as a cofactor.

Its function is as follows. Necessary for normal cell division and for the maintenance of normal septation. The protein is Probable GTP-binding protein EngB of Xylella fastidiosa (strain Temecula1 / ATCC 700964).